Here is a 335-residue protein sequence, read N- to C-terminus: Holliday junction branch migration complex subunit RuvB (335 aa).

The tract at residues 4 to 184 (VDRIVSANAK…FGIVQRLEFY (181 aa)) is large ATPase domain (RuvB-L). ATP-binding positions include Ile23, Arg24, Gly65, Lys68, Thr69, Thr70, 131–133 (EDY), Arg174, Tyr184, and Arg221. A Mg(2+)-binding site is contributed by Thr69. A small ATPAse domain (RuvB-S) region spans residues 185-255 (SVEDLASIVT…IAQEALKMLD (71 aa)). The segment at 258–335 (LAGFDFMDRK…RHFGLEQIEK (78 aa)) is head domain (RuvB-H). DNA-binding residues include Arg294, Arg313, and Arg318.

Belongs to the RuvB family. Homohexamer. Forms an RuvA(8)-RuvB(12)-Holliday junction (HJ) complex. HJ DNA is sandwiched between 2 RuvA tetramers; dsDNA enters through RuvA and exits via RuvB. An RuvB hexamer assembles on each DNA strand where it exits the tetramer. Each RuvB hexamer is contacted by two RuvA subunits (via domain III) on 2 adjacent RuvB subunits; this complex drives branch migration. In the full resolvosome a probable DNA-RuvA(4)-RuvB(12)-RuvC(2) complex forms which resolves the HJ.

The protein resides in the cytoplasm. The catalysed reaction is ATP + H2O = ADP + phosphate + H(+). The RuvA-RuvB-RuvC complex processes Holliday junction (HJ) DNA during genetic recombination and DNA repair, while the RuvA-RuvB complex plays an important role in the rescue of blocked DNA replication forks via replication fork reversal (RFR). RuvA specifically binds to HJ cruciform DNA, conferring on it an open structure. The RuvB hexamer acts as an ATP-dependent pump, pulling dsDNA into and through the RuvAB complex. RuvB forms 2 homohexamers on either side of HJ DNA bound by 1 or 2 RuvA tetramers; 4 subunits per hexamer contact DNA at a time. Coordinated motions by a converter formed by DNA-disengaged RuvB subunits stimulates ATP hydrolysis and nucleotide exchange. Immobilization of the converter enables RuvB to convert the ATP-contained energy into a lever motion, pulling 2 nucleotides of DNA out of the RuvA tetramer per ATP hydrolyzed, thus driving DNA branch migration. The RuvB motors rotate together with the DNA substrate, which together with the progressing nucleotide cycle form the mechanistic basis for DNA recombination by continuous HJ branch migration. Branch migration allows RuvC to scan DNA until it finds its consensus sequence, where it cleaves and resolves cruciform DNA. The chain is Holliday junction branch migration complex subunit RuvB from Histophilus somni (strain 129Pt) (Haemophilus somnus).